Consider the following 104-residue polypeptide: ATP-dependent Clp protease adapter protein ClpS (104 aa).

The segment at Met1–Thr20 is disordered.

The protein belongs to the ClpS family. As to quaternary structure, binds to the N-terminal domain of the chaperone ClpA.

Functionally, involved in the modulation of the specificity of the ClpAP-mediated ATP-dependent protein degradation. This chain is ATP-dependent Clp protease adapter protein ClpS, found in Desulfatibacillum aliphaticivorans.